The sequence spans 629 residues: tRNA uridine 5-carboxymethylaminomethyl modification enzyme MnmG (629 aa).

FAD contacts are provided by residues 14-19 (GAGHAG), Val126, and Ser181. 273-287 (GPRYCPSIEDKVVRF) serves as a coordination point for NAD(+). Gln370 is a binding site for FAD.

Belongs to the MnmG family. As to quaternary structure, homodimer. Heterotetramer of two MnmE and two MnmG subunits. FAD serves as cofactor.

It is found in the cytoplasm. Functionally, NAD-binding protein involved in the addition of a carboxymethylaminomethyl (cmnm) group at the wobble position (U34) of certain tRNAs, forming tRNA-cmnm(5)s(2)U34. This is tRNA uridine 5-carboxymethylaminomethyl modification enzyme MnmG from Bacillus cereus (strain ATCC 10987 / NRS 248).